The primary structure comprises 442 residues: MDAWPRCLERLEAEFPPEDVHTWLKPLQAEDRGDSIVLYAPNAFIVDQVRERYLPRIRELLAYFVGNGDVALAVGSRPRAPEPAPAPVAVPSAPQAAPIVPFAGNLDSHYTFANFVEGRSNQLGLAAAIQAAQKPGDRAHNPLLLYGSTGLGKTHLMFAAGNALRQANPAAKVMYLRSEQFFSAMIRALQDKAMDQFKRQFQQIDALLIDDIQFFAGKDRTQEEFFHTFNALFDGRQQIILTCDRYPREVEGLEPRLKSRLAWGLSVAIDPPDFETRAAIVLAKARERGAEIPDDVAFLIAKKMRSNVRDLEGALNTLVARANFTGRSITVEFAQETLRDLLRAQQQAIGIPNIQKTVADYYGLQMKDLLSKRRTRSLARPRQVAMALAKELTEHSLPEIGDAFAGRDHTTVLHACRQIRTLMEADGKLREDWEKLIRKLSE.

The interval 1–68 (MDAWPRCLER…ELLAYFVGNG (68 aa)) is domain I, interacts with DnaA modulators. Positions 68 to 104 (GDVALAVGSRPRAPEPAPAPVAVPSAPQAAPIVPFAG) are domain II. A domain III, AAA+ region region spans residues 105-322 (NLDSHYTFAN…GALNTLVARA (218 aa)). Residues glycine 150, glycine 152, lysine 153, and threonine 154 each contribute to the ATP site. The interval 323–442 (NFTGRSITVE…WEKLIRKLSE (120 aa)) is domain IV, binds dsDNA.

This sequence belongs to the DnaA family. Oligomerizes as a right-handed, spiral filament on DNA at oriC.

Its subcellular location is the cytoplasm. Its function is as follows. Plays an essential role in the initiation and regulation of chromosomal replication. ATP-DnaA binds to the origin of replication (oriC) to initiate formation of the DNA replication initiation complex once per cell cycle. Binds the DnaA box (a 9 base pair repeat at the origin) and separates the double-stranded (ds)DNA. Forms a right-handed helical filament on oriC DNA; dsDNA binds to the exterior of the filament while single-stranded (ss)DNA is stabiized in the filament's interior. The ATP-DnaA-oriC complex binds and stabilizes one strand of the AT-rich DNA unwinding element (DUE), permitting loading of DNA polymerase. After initiation quickly degrades to an ADP-DnaA complex that is not apt for DNA replication. Binds acidic phospholipids. In Xanthomonas axonopodis pv. citri (strain 306), this protein is Chromosomal replication initiator protein DnaA.